An 895-amino-acid chain; its full sequence is Clathrin interactor EPSIN 2 (895 aa).

The 133-residue stretch at 18–150 folds into the ENTH domain; sequence KKVLKVPGVE…NDKERIAEVR (133 aa). Basic and acidic residues-rich tracts occupy residues 150–161, 177–236, and 245–257; these read RQKAAANRDKYR, DKYD…RSRS, and RSSEREREDDGHS. A disordered region spans residues 150–396; the sequence is RQKAAANRDK…PTVTSMSAPT (247 aa). Residues Ser270 and Ser282 each carry the phosphoserine modification. A compositionally biased stretch (low complexity) spans 329 to 348; that stretch reads AAPEAASPPTGTNTANTTAT. Polar residues-rich tracts occupy residues 349–358 and 387–396; these read FVNESPSQKV and PTVTSMSAPT. The Clathrin binding motif lies at 409 to 413; it reads LADVF. Disordered stretches follow at residues 436–533 and 758–784; these read AGPA…PQEQ and KQTNTPATSTINMGKAMGSGTGLGRSG. Low complexity predominate over residues 440-454; the sequence is PSFSTSQPSTQSFDD. The short motif at 454–456 is the ALPHA-ADR binding element; that stretch reads DPF. 3 stretches are compositionally biased toward polar residues: residues 464 to 479, 515 to 533, and 759 to 769; these read FTSTDTDSTPQQNFGA, PASQNVQPPSNSPGFPQEQ, and QTNTPATSTIN.

Belongs to the epsin family. Interacts with clathrin, VTI12, DELTA-ADR and ALPHA-ADR.

It is found in the golgi apparatus. It localises to the cytoplasmic vesicle. Its subcellular location is the clathrin-coated vesicle. Its function is as follows. May have a role in transport via clathrin-coated vesicles from the trans-Golgi network to endosomes. Stimulates clathrin assembly. Binds to membranes enriched in phosphatidylinositol 3-phosphate (PtdIns(3)P). Plays an important role in protein trafficking. This Arabidopsis thaliana (Mouse-ear cress) protein is Clathrin interactor EPSIN 2 (EPSIN2).